Here is a 139-residue protein sequence, read N- to C-terminus: GSK3B-interacting protein (139 aa).

The segment at 41 to 45 (VNDVL) is required for PRKAR2A interaction; contributes to a protective effect against H(2)O(2)-induced apoptosis. Positions 115–139 (SPAYREAFGNALLQRLEALKREGQS) are interaction with GSK3B and acts as a GSK3B inhibitor.

Belongs to the GSKIP family. In terms of assembly, forms a complex composed of PRKAR2A or PRKAR2B, GSK3B and GSKIP through GSKIP interaction; facilitates PKA-induced phosphorylation of GSK3B leading to GSK3B inactivation; recruits DNM1L through GSK3B for PKA-mediated phosphorylation of DNM1L; promotes beta-catenin degradation through GSK3B-induced phosphorylation of beta-catenin; stabilizes beta-catenin and enhances Wnt-induced signaling through PKA-induced phosphorylation of beta-catenin. Interacts with GSK3B; induces GSK3B-mediated phosphorylation of GSKIP and inhibits GSK3B kinase activity. Post-translationally, phosphorylated by GSK3B.

The protein localises to the cytoplasm. It localises to the nucleus. In terms of biological role, A-kinase anchoring protein for GSK3B and PKA that regulates or facilitates their kinase activity towards their targets. The ternary complex enhances Wnt-induced signaling by facilitating the GSK3B- and PKA-induced phosphorylation of beta-catenin leading to beta-catenin degradation and stabilization respectively. Upon cAMP activation, the ternary complex contributes to neuroprotection against oxidative stress-induced apoptosis by facilitating the PKA-induced phosphorylation of DML1 and PKA-induced inactivation of GSK3B. During neurite outgrowth promotes neuron proliferation; while increases beta-catenin-induced transcriptional activity through GSK3B kinase activity inhibition, reduces N-cadherin level to promote cell cycle progression. May play a role in cleft palate formation and is required for postnatal life through modulation of the activity of GSK3B during development. The sequence is that of GSK3B-interacting protein from Bos taurus (Bovine).